A 665-amino-acid polypeptide reads, in one-letter code: PR5-like receptor kinase (665 aa).

The N-terminal stretch at 1–24 is a signal peptide; it reads MVEGFSLSLMFLLVSHFFVSGVMS. The Extracellular portion of the chain corresponds to 25–276; sequence RNFTIENKCD…TKQKSSWKLK (252 aa). Residues asparagine 26 and asparagine 88 are each glycosylated (N-linked (GlcNAc...) asparagine). Intrachain disulfides connect cysteine 33–cysteine 249, cysteine 81–cysteine 91, cysteine 96–cysteine 103, cysteine 153–cysteine 238, cysteine 158–cysteine 221, cysteine 166–cysteine 184, cysteine 188–cysteine 197, and cysteine 198–cysteine 208. An N-linked (GlcNAc...) asparagine glycan is attached at asparagine 163. Asparagine 233 is a glycosylation site (N-linked (GlcNAc...) asparagine). A helical transmembrane segment spans residues 277–297; the sequence is LIVGVSAALTLMILIVVVIIV. Over 298 to 665 the chain is Cytoplasmic; sequence RTKNMRNSEW…DVLQHGSRSS (368 aa). Residues 331–620 form the Protein kinase domain; it reads NSFAHVLGKG…ALQVPPNPLL (290 aa). ATP-binding positions include 337–345 and lysine 360; that span reads LGKGGFGTV. Aspartate 455 (proton acceptor) is an active-site residue.

It in the N-terminal section; belongs to the thaumatin family. This sequence in the C-terminal section; belongs to the protein kinase superfamily. Ser/Thr protein kinase family. In terms of processing, autophosphorylated in vitro. In terms of tissue distribution, expressed in roots. Expressed at low levels in stems.

It is found in the membrane. It carries out the reaction L-seryl-[protein] + ATP = O-phospho-L-seryl-[protein] + ADP + H(+). It catalyses the reaction L-threonyl-[protein] + ATP = O-phospho-L-threonyl-[protein] + ADP + H(+). Its function is as follows. Possesses kinase activity in vitro. The protein is PR5-like receptor kinase of Arabidopsis thaliana (Mouse-ear cress).